A 335-amino-acid polypeptide reads, in one-letter code: Glyceraldehyde-3-phosphate dehydrogenase (335 aa).

NAD(+) contacts are provided by residues arginine 10–isoleucine 11, aspartate 33, lysine 77, and threonine 119. D-glyceraldehyde 3-phosphate contacts are provided by residues serine 150–threonine 152, threonine 181, threonine 210–glycine 211, and arginine 233. The active-site Nucleophile is cysteine 151. Asparagine 315 serves as a coordination point for NAD(+).

This sequence belongs to the glyceraldehyde-3-phosphate dehydrogenase family. Homotetramer.

It is found in the cytoplasm. The enzyme catalyses D-glyceraldehyde 3-phosphate + phosphate + NAD(+) = (2R)-3-phospho-glyceroyl phosphate + NADH + H(+). It participates in carbohydrate degradation; glycolysis; pyruvate from D-glyceraldehyde 3-phosphate: step 1/5. In terms of biological role, catalyzes the oxidative phosphorylation of glyceraldehyde 3-phosphate (G3P) to 1,3-bisphosphoglycerate (BPG) using the cofactor NAD. The first reaction step involves the formation of a hemiacetal intermediate between G3P and a cysteine residue, and this hemiacetal intermediate is then oxidized to a thioester, with concomitant reduction of NAD to NADH. The reduced NADH is then exchanged with the second NAD, and the thioester is attacked by a nucleophilic inorganic phosphate to produce BPG. In Chlamydia muridarum (strain MoPn / Nigg), this protein is Glyceraldehyde-3-phosphate dehydrogenase (gap).